Reading from the N-terminus, the 372-residue chain is Transcription factor YY2 (372 aa).

The interval 32 to 102 (MEDIPTESVQ…SDNQLGNDLE (71 aa)) is mediates transcriptional activation. Over residues 126 to 136 (SAASTSTSTQS) the composition is skewed to low complexity. 2 disordered regions span residues 126 to 172 (SAAS…WEQK) and 186 to 210 (TMWS…PPDY). The span at 137-146 (RSKKPSKKPS) shows a compositional bias: basic residues. Composition is skewed to polar residues over residues 154–165 (EANPAGSSSSLG) and 186–196 (TMWSPNDNNDQ). The mediates transcriptional repression stretch occupies residues 237 to 372 (EFTKVKPKRS…LTHVKTKNNP (136 aa)). C2H2-type zinc fingers lie at residues 254-278 (VPCS…LHIH), 283-305 (HVCA…QLVH), 311-335 (FQCT…LRIH), and 341-365 (FVCP…ILTH).

It belongs to the YY transcription factor family. As to expression, expressed in kidney, liver, spleen and testis but not in colon.

Its subcellular location is the nucleus. Functionally, functions as a multifunctional transcription factor that may exhibit positive and negative control on a large number of genes. May antagonize YY1 and function in development and differentiation. In Homo sapiens (Human), this protein is Transcription factor YY2 (YY2).